Consider the following 813-residue polypeptide: ATP-dependent zinc metalloprotease FTSH 10, mitochondrial (813 aa).

The transit peptide at 1–86 (MIFSKLGSSL…FANPRLRRFF (86 aa)) directs the protein to the mitochondrion. The segment at 93–129 (KKNYENYYPKDSKKAPKNEQKSESRDGSKKNENENAG) is disordered. Residues 94-125 (KNYENYYPKDSKKAPKNEQKSESRDGSKKNEN) show a composition bias toward basic and acidic residues. A helical transmembrane segment spans residues 139–157 (MLIPLMAIALILSTFSLGS). 367-374 (GPPGTGKT) contributes to the ATP binding site. Histidine 592 provides a ligand contact to Zn(2+). Glutamate 593 is a catalytic residue. Positions 596 and 668 each coordinate Zn(2+). Positions 764–790 (RPFKSGETTNYDRFKSGFEESEKESQK) are enriched in basic and acidic residues. The tract at residues 764 to 813 (RPFKSGETTNYDRFKSGFEESEKESQKESVPVKPVEDDGIPPLEPQVVPT) is disordered.

The protein in the N-terminal section; belongs to the AAA ATPase family. This sequence in the C-terminal section; belongs to the peptidase M41 family. Zn(2+) serves as cofactor.

It localises to the mitochondrion inner membrane. Its function is as follows. Probable ATP-dependent zinc metallopeptidase. Involved in the assembly and/or stability of the complexes I and V of the mitochondrial oxidative phosphorylation system. In Arabidopsis thaliana (Mouse-ear cress), this protein is ATP-dependent zinc metalloprotease FTSH 10, mitochondrial (FTSH10).